The following is a 220-amino-acid chain: Histone H1B (220 aa).

Disordered regions lie at residues 1–45 (MTAT…PSAS) and 99–220 (QVKG…APKK). Residues 28–45 (KKVAGGAKAKKPSGPSAS) are compositionally biased toward low complexity. One can recognise an H15 domain in the interval 40-113 (SGPSASELIV…GASGSFKLNK (74 aa)). Basic residues-rich tracts occupy residues 122–134 (AAKKKPAAPKAKK), 141–151 (KAPKSPKKPKK), 158–196 (SPKKVKKLAKAAKSPKKPKAVKAKKVAKSPAKKATKPKT), and 204–220 (KVAKPKAAKAKKPAPKK).

Belongs to the histone H1/H5 family.

It localises to the nucleus. It is found in the chromosome. Its function is as follows. Histones H1 are necessary for the condensation of nucleosome chains into higher-order structures. The polypeptide is Histone H1B (Xenopus laevis (African clawed frog)).